We begin with the raw amino-acid sequence, 808 residues long: Zinc finger protein 148 (808 aa).

Disordered stretches follow at residues 15 to 86 (SPVG…ISQD) and 131 to 162 (DSLI…SPAK). Acidic residues predominate over residues 56 to 73 (AEDDDDEDEEEDDDDDLA). Positions 150–159 (HKKKKRKQRS) are enriched in basic residues. C2H2-type zinc fingers lie at residues 180-202 (HICE…VFIH), 208-230 (FQCN…EKIH), 236-258 (FRCD…KRTH), and 264-287 (YQCD…RMCH). 3 disordered regions span residues 305–338 (RTPE…ASIT), 596–617 (SINS…QAPP), and 705–736 (SFSG…DPQS). Polar residues-rich tracts occupy residues 705–718 (SFSG…SVSP) and 725–736 (QVTSPKKTDPQS).

The protein belongs to the krueppel C2H2-type zinc-finger protein family.

The protein localises to the nucleus. In terms of biological role, involved in transcriptional regulation. Represses the transcription of a number of genes. Required for primitive and definitive hematopoiesis during embryonic development. In Danio rerio (Zebrafish), this protein is Zinc finger protein 148 (znf148).